Reading from the N-terminus, the 130-residue chain is Ribosome-binding factor A (130 aa).

Positions 111–130 (RDLDDVGPEATSSDEDAEQR) are disordered.

The protein belongs to the RbfA family. Monomer. Binds 30S ribosomal subunits, but not 50S ribosomal subunits or 70S ribosomes.

It localises to the cytoplasm. One of several proteins that assist in the late maturation steps of the functional core of the 30S ribosomal subunit. Associates with free 30S ribosomal subunits (but not with 30S subunits that are part of 70S ribosomes or polysomes). Required for efficient processing of 16S rRNA. May interact with the 5'-terminal helix region of 16S rRNA. The polypeptide is Ribosome-binding factor A (Xanthomonas axonopodis pv. citri (strain 306)).